A 154-amino-acid polypeptide reads, in one-letter code: Myoglobin (154 aa).

The Globin domain occupies 2 to 148; that stretch reads VLSDGEWQLV…FRKDIAAKYK (147 aa). Residue Ser4 is modified to Phosphoserine. Position 65 (His65) interacts with nitrite. An O2-binding site is contributed by His65. Thr68 carries the post-translational modification Phosphothreonine. Position 94 (His94) interacts with heme b.

It belongs to the globin family. As to quaternary structure, monomeric.

It localises to the cytoplasm. The protein localises to the sarcoplasm. It catalyses the reaction Fe(III)-heme b-[protein] + nitric oxide + H2O = Fe(II)-heme b-[protein] + nitrite + 2 H(+). It carries out the reaction H2O2 + AH2 = A + 2 H2O. Monomeric heme protein which primary function is to store oxygen and facilitate its diffusion within muscle tissues. Reversibly binds oxygen through a pentacoordinated heme iron and enables its timely and efficient release as needed during periods of heightened demand. Depending on the oxidative conditions of tissues and cells, and in addition to its ability to bind oxygen, it also has a nitrite reductase activity whereby it regulates the production of bioactive nitric oxide. Under stress conditions, like hypoxia and anoxia, it also protects cells against reactive oxygen species thanks to its pseudoperoxidase activity. This chain is Myoglobin, found in Balaena mysticetus (Bowhead whale).